Reading from the N-terminus, the 161-residue chain is Immunity protein YezG (161 aa).

In terms of assembly, monomer. Interacts with the C-terminus of cognate toxin YeeF, probably with 2:2 stoichiometry. The second YezG molecules binds with lower affinity.

The protein resides in the cytoplasm. Functionally, immunity component of an LXG toxin-immunity module. These modules promote kin selection, mediate competition in biofilms, and drive spatial segregation of different strains, indicating that LXG toxins may help avoid warfare between strains in biofilms. Neutralizes the toxic abilities of cognate toxin YeeF upon expression in E.coli and in vitro. The protein is Immunity protein YezG of Bacillus spizizenii (strain ATCC 23059 / NRRL B-14472 / W23) (Bacillus subtilis subsp. spizizenii).